A 371-amino-acid chain; its full sequence is NADP-dependent oxidoreductase lnaE (371 aa).

Residues 172-175 (DEIG), Lys-198, Tyr-214, Asn-237, 277-283 (YGTIAEQ), and 307-309 (FGL) contribute to the NADP(+) site.

This sequence belongs to the NADP-dependent oxidoreductase L4BD family.

It participates in secondary metabolite biosynthesis. Its function is as follows. NADP-dependent oxidoreductase; part of the lna gene cluster that mediates the biosynthesis of diastereomeric piperazines. Lna and lnb clusters encode sets of enzymes that produce overlapping sets of previously undescribed metabolites such as piperazinomycin-like metabolites or morpholine. The lna and lnb biosynthetic pathways appear to be part of a signaling network that controls the formation of sclerotia, a resilient overwintering structure. One primary function of the non-canonical nonribosomal peptide synthetases lnaA and lnbA consists in the reduction of L-tyrosine. The presence in the clusters of tailoring enzymes such as the oxidoreductases lnaB, lnbB, lnaE or lnbE, as well as of the cytochrome P450 monooxygenases lnaC, lnaD, or lnbC, might explain formation of various diastereomeric piperazines. This chain is NADP-dependent oxidoreductase lnaE, found in Aspergillus flavus (strain ATCC 200026 / FGSC A1120 / IAM 13836 / NRRL 3357 / JCM 12722 / SRRC 167).